Reading from the N-terminus, the 145-residue chain is Putative nickel-responsive regulator (145 aa).

Residues His-77, His-88, His-90, and Cys-96 each contribute to the Ni(2+) site.

This sequence belongs to the transcriptional regulatory CopG/NikR family. Ni(2+) is required as a cofactor.

Transcriptional regulator. The protein is Putative nickel-responsive regulator of Rhizobium rhizogenes (strain K84 / ATCC BAA-868) (Agrobacterium radiobacter).